The primary structure comprises 235 residues: Voltage-gated hydrogen channel 1 (235 aa).

Residues 1–62 are Cytoplasmic-facing; it reads MSRYLKHFTV…VMKKLFSSRR (62 aa). Residues 63 to 83 traverse the membrane as a helical segment; the sequence is FQIVIVFLVIVDALLVLGELL. Topologically, residues 84 to 100 are extracellular; it reads MDLKIIHPDKYHIAPKV. The helical transmembrane segment at 101–123 threads the bilayer; sequence FHYLSLSILTIFLVEVGFKIFVY. At 124 to 131 the chain is on the cytoplasmic side; it reads GREFFHHK. Residues 132 to 152 traverse the membrane as a helical segment; the sequence is FEVLDSIVVVVSFILDLVLLF. Residues 153–159 lie on the Extracellular side of the membrane; that stretch reads REHEFEA. The helical transmembrane segment at 160 to 180 threads the bilayer; the sequence is VGLLILLRLWRVARIINGIIL. The Cytoplasmic portion of the chain corresponds to 181–235; sequence SVKTRSEQQVSKLKQVNLKLATKVEQLQHSCVEKEQEIERLTRMLKQHGLLSEQT. Positions 187–228 form a coiled coil; sequence EQQVSKLKQVNLKLATKVEQLQHSCVEKEQEIERLTRMLKQH.

It belongs to the hydrogen channel family. In terms of assembly, homodimer.

The protein localises to the membrane. It localises to the cell membrane. Functionally, mediates the voltage-dependent proton permeability of excitable membranes. Forms a proton-selective channel through which protons may pass in accordance with their electrochemical gradient. In Gallus gallus (Chicken), this protein is Voltage-gated hydrogen channel 1 (HVCN1).